Reading from the N-terminus, the 203-residue chain is ESCRT-related protein CHMP1B (203 aa).

Coiled coils occupy residues 13-51 (DLKFTSKSLQRQSRKCEKEEKAEKLKVKKAIEKGNMDGA) and 109-140 (GNLQKMSETMDSFEKQFVNMEVQAEFMENAMA). Residues 172–203 (PQPAGHAIPTKTEEKVDEDDLSRRLAELKARG) form a disordered region. The span at 192–203 (LSRRLAELKARG) shows a compositional bias: basic and acidic residues.

The protein belongs to the SNF7 family. In terms of assembly, interacts with CHMP1A and LIP5. Interacts with VPS2.2.

Its subcellular location is the cytoplasm. The protein resides in the endosome membrane. Its function is as follows. Involved in ESCRT-dependent multivesicular body (MVB) formation and sorting of endosomal cargo proteins into MVBs. Mediates the MVB sorting of the auxin carriers PIN1, PIN2 and AUX1. Required for embryonic axis establishment and seedling growth. Required for autophagic degradation of plastid proteins. Promotes the efficient sequestration of cargo from plastids into autophagosomes. Mediates the efficient delivery of autophagic plastid bodies to the vacuole, but not into the cytoplasm. The sequence is that of ESCRT-related protein CHMP1B from Arabidopsis thaliana (Mouse-ear cress).